A 153-amino-acid chain; its full sequence is Prostaglandin E synthase (153 aa).

Residues 1 to 13 are Lumenal-facing; it reads MTSLGLVMENSQV. A helical transmembrane segment spans residues 14 to 42; that stretch reads LPAFLLCSTLLVIKMYAVAVITGQVRLRK. Arg39 is a glutathione binding site. Topologically, residues 43-61 are cytoplasmic; the sequence is KAFANPEDALKRGGLQYCR. Residues 62–91 traverse the membrane as a helical segment; it reads SDPDVERCLRAHRNDMETIYPFLFLGFVYS. 74-78 provides a ligand contact to glutathione; that stretch reads RNDME. Over 92-98 the chain is Lumenal; sequence FLGPNPL. A helical membrane pass occupies residues 99 to 120; it reads IAWIHFLVVLTGRVVHTVAYLG. His114 and Tyr118 together coordinate glutathione. Residues 121 to 124 lie on the Cytoplasmic side of the membrane; the sequence is KMNP. Residues 125-153 form a helical membrane-spanning segment; it reads RIRSGAYVLAQFACFSMALQILWEVAHHL. Glutathione is bound at residue 127–131; it reads RSGAY.

Belongs to the MAPEG family. Glutathione is required as a cofactor.

It localises to the membrane. The protein resides in the cytoplasm. The protein localises to the perinuclear region. It carries out the reaction prostaglandin H2 = prostaglandin E2. The enzyme catalyses 2-glyceryl-prostaglandin H2 = 2-glyceryl-prostaglandin E2. It catalyses the reaction prostaglandin G2 = (15S)-15-hydroperoxy-prostaglandin E2. The catalysed reaction is 1-chloro-2,4-dinitrobenzene + glutathione = 2,4-dinitrophenyl-S-glutathione + chloride + H(+). It carries out the reaction (5S)-hydroperoxy-(6E,8Z,11Z,14Z)-eicosatetraenoate + 2 glutathione = (5S)-hydroxy-(6E,8Z,11Z,14Z)-eicosatetraenoate + glutathione disulfide + H2O. Its pathway is lipid metabolism; prostaglandin biosynthesis. Its activity is regulated as follows. Activity is increased following LPS stimulation and down-regulated by the anti-inflammatory glucocorticoid dexamethasone. In terms of biological role, terminal enzyme of the cyclooxygenase (COX)-2-mediated prostaglandin E2 (PGE2) biosynthetic pathway. Catalyzes the glutathione-dependent oxidoreduction of prostaglandin endoperoxide H2 (PGH2) to prostaglandin E2 (PGE2) in response to inflammatory stimuli. Plays a key role in inflammation response, fever and pain. Also catalyzes the oxidoreduction of endocannabinoids into prostaglandin glycerol esters and PGG2 into 15-hydroperoxy-PGE2. In addition, displays low glutathione transferase and glutathione-dependent peroxidase activities, toward 1-chloro-2,4-dinitrobenzene and 5-hydroperoxyicosatetraenoic acid (5-HPETE), respectively. This Rattus norvegicus (Rat) protein is Prostaglandin E synthase (Ptges).